Consider the following 66-residue polypeptide: Large ribosomal subunit protein bL35 (66 aa).

The interval 1 to 23 (MPKMKTHRASAKRFKRTANGGLK) is disordered.

It belongs to the bacterial ribosomal protein bL35 family.

The protein is Large ribosomal subunit protein bL35 of Lactobacillus helveticus (strain DPC 4571).